The primary structure comprises 379 residues: tRNA(Met) cytidine acetate ligase (379 aa).

ATP-binding positions include 7-20 (ITEY…HQYH), glycine 100, asparagine 153, and arginine 178.

The protein belongs to the TmcAL family.

The protein resides in the cytoplasm. It catalyses the reaction cytidine(34) in elongator tRNA(Met) + acetate + ATP = N(4)-acetylcytidine(34) in elongator tRNA(Met) + AMP + diphosphate. Functionally, catalyzes the formation of N(4)-acetylcytidine (ac(4)C) at the wobble position of elongator tRNA(Met), using acetate and ATP as substrates. First activates an acetate ion to form acetyladenylate (Ac-AMP) and then transfers the acetyl group to tRNA to form ac(4)C34. The chain is tRNA(Met) cytidine acetate ligase from Staphylococcus aureus (strain MRSA252).